The sequence spans 439 residues: Xaa-Pro dipeptidase (439 aa).

Mn(2+) is bound by residues aspartate 244, aspartate 255, histidine 335, glutamate 380, and glutamate 419.

The protein belongs to the peptidase M24B family. Bacterial-type prolidase subfamily. Mn(2+) serves as cofactor.

It carries out the reaction Xaa-L-Pro dipeptide + H2O = an L-alpha-amino acid + L-proline. Its function is as follows. Splits dipeptides with a prolyl residue in the C-terminal position. In Shewanella woodyi (strain ATCC 51908 / MS32), this protein is Xaa-Pro dipeptidase.